The chain runs to 157 residues: uncharacterized protein (157 aa).

In terms of domain architecture, N-acetyltransferase spans 9–154 (LLINYKTLDE…ETNSNAITNE (146 aa)).

This is an uncharacterized protein from Bacillus mycoides (strain KBAB4) (Bacillus weihenstephanensis).